We begin with the raw amino-acid sequence, 1117 residues long: Endogenous retrovirus group K member 9 Pol protein (1117 aa).

Gly-2 carries N-myristoyl glycine lipidation. A Reverse transcriptase domain is found at 58–195 (KDWKRIGKEL…AGQVPVTLQP (138 aa)). Residues 165–264 (GKGPELVGPS…APPSRQGSEL (100 aa)) are disordered. Residues 232 to 247 (GMPPAPQGRAPYPQPP) are compositionally biased toward pro residues. 2 consecutive CCHC-type zinc fingers follow at residues 544-561 (GKCY…NCPV) and 580-597 (DLCP…QCRS). The segment at 598 to 629 (KFDKNGQPLSGNEQRGQPQAPQQTGAFPIQPF) is disordered. The segment covering 604–622 (QPLSGNEQRGQPQAPQQTG) has biased composition (polar residues). The 76-residue stretch at 800–875 (FEGLVDTGAD…IPLNLWGRDL (76 aa)) folds into the Peptidase A2 domain. Residue Asp-805 is part of the active site. A G-patch domain is found at 890–936 (YSPTSQKIMTKRGYIPGKGLGKNEDGIKIPFEAKINQKREGIGYPFL).

The protein belongs to the beta type-B retroviral polymerase family. HERV class-II K(HML-2) pol subfamily. In terms of processing, myristoylation is essential for retroviral assembly. Alteration of the glycine residue leads to a block in the budding of particles and an accumulation of Gag inside the cell. Specific enzymatic cleavages may yield mature proteins.

It is found in the cell membrane. The catalysed reaction is Processing at the authentic HIV-1 PR recognition site and release of the mature p17 matrix and the p24 capsid protein, as a result of the cleavage of the -SQNY-|-PIVQ- cleavage site.. It carries out the reaction DNA(n) + a 2'-deoxyribonucleoside 5'-triphosphate = DNA(n+1) + diphosphate. It catalyses the reaction Endonucleolytic cleavage to 5'-phosphomonoester.. Its function is as follows. The products of the Gag polyproteins of infectious retroviruses perform highly complex orchestrated tasks during the assembly, budding, maturation, and infection stages of the viral replication cycle. During viral assembly, the proteins form membrane associations and self-associations that ultimately result in budding of an immature virion from the infected cell. Gag precursors also function during viral assembly to selectively bind and package two plus strands of genomic RNA. Endogenous Gag proteins may have kept, lost or modified their original function during evolution. Functionally, early post-infection, the reverse transcriptase converts the viral RNA genome into double-stranded viral DNA. The RNase H domain of the reverse transcriptase performs two functions. It degrades the RNA template and specifically removes the RNA primer from the RNA/DNA hybrid. Following nuclear import, the integrase catalyzes the insertion of the linear, double-stranded viral DNA into the host cell chromosome. Endogenous Pol proteins may have kept, lost or modified their original function during evolution. This chain is Endogenous retrovirus group K member 9 Pol protein (ERVK-9), found in Homo sapiens (Human).